The following is a 279-amino-acid chain: H-2 class II histocompatibility antigen gamma chain (279 aa).

The interval 1–23 (MDDQRDLISNHEQLPILGNRPRE) is disordered. The Cytoplasmic segment spans residues 1–29 (MDDQRDLISNHEQLPILGNRPREPERCSR). S9 bears the Phosphoserine mark. The chain crosses the membrane as a helical; Signal-anchor for type II membrane protein span at residues 30–55 (GALYTGVSVLVALLLAGQATTAYFLY). Over 56 to 279 (QQQGRLDKLT…TRQELGQVTL (224 aa)) the chain is Extracellular. N-linked (GlcNAc...) asparagine glycosylation is found at N113 and N119. A Thyroglobulin type-1 domain is found at 193 to 254 (LTKCQEEVSH…HTKSRGRHNC (62 aa)). Cystine bridges form between C196–C215, C226–C233, and C235–C254. The O-linked (Xyl...) (chondroitin sulfate) serine glycan is linked to S265.

As to quaternary structure, nonamer composed of three alpha/beta/gamma heterotrimers. Interacts with CD44; this complex is essential for the MIF-induced signaling cascade that results in B cell survival. Interacts with the mature form of CTSL; the complex survive in neutral pH environment. Expressed in thymus and lymph noodes. Expressed by antigen-presenting cells (APCs). As to expression, expressed in thymus and lymph noodes.

Its subcellular location is the late endosome. The protein localises to the lysosome. It is found in the cell membrane. It localises to the endoplasmic reticulum membrane. The protein resides in the golgi apparatus. Its subcellular location is the trans-Golgi network. The protein localises to the endosome. It is found in the secreted. Its function is as follows. Plays a critical role in MHC class II antigen processing by stabilizing peptide-free class II alpha/beta heterodimers in a complex soon after their synthesis and directing transport of the complex from the endoplasmic reticulum to compartments where peptide loading of class II takes place. Enhance also the stimulation of T-cell responses through interaction with CD44. In terms of biological role, stabilizes the conformation of mature CTSL by binding to its active site and serving as a chaperone to help maintain a pool of mature enzyme in endocytic compartments and extracellular space of antigen-presenting cells (APCs). Functionally, binds to the peptide-binding site of MHC class II alpha/beta heterodimers forming an alpha-beta-CLIP complex, thereby preventing the loading of antigenic peptides to the MHC class II complex until its release by HLA-DM in the endosome. The polypeptide is H-2 class II histocompatibility antigen gamma chain (Mus musculus (Mouse)).